Here is a 317-residue protein sequence, read N- to C-terminus: (2S)-3-sulfopropanediol dehydratase activating enzyme (317 aa).

The Radical SAM core domain occupies 18–306; the sequence is HDGPGLRTEL…QMLAEYFNQR (289 aa). Positions 32, 36, 39, 58, 64, 67, 71, 92, 95, 98, and 102 each coordinate [4Fe-4S] cluster. Residue 38 to 40 coordinates S-adenosyl-L-methionine; it reads WCS. 4Fe-4S ferredoxin-type domains follow at residues 49 to 82 and 83 to 112; these read AQVG…FTRG and KLTS…LWGK. S-adenosyl-L-methionine-binding positions include Gly-142 and 191-193; that span reads DIK.

This sequence belongs to the organic radical-activating enzymes family. [4Fe-4S] cluster serves as cofactor.

It catalyses the reaction glycyl-[protein] + reduced [flavodoxin] + S-adenosyl-L-methionine = glycin-2-yl radical-[protein] + semiquinone [flavodoxin] + 5'-deoxyadenosine + L-methionine + H(+). Its pathway is organosulfur degradation; alkanesulfonate degradation. Involved in the degradation of the organosulfur compound 2(S)-dihydroxypropanesulfonate (DHPS). Catalyzes activation of the (2S)-3-sulfopropanediol dehydratase HpfG under anaerobic conditions by generation of an organic free radical on a glycine residue. This chain is (2S)-3-sulfopropanediol dehydratase activating enzyme, found in Klebsiella oxytoca.